A 490-amino-acid chain; its full sequence is GTPase Der (490 aa).

2 consecutive EngA-type G domains span residues 3–166 (PVVA…MEDL) and 203–376 (IKLA…DSST). Residues 9–16 (GRPNVGKS), 56–60 (DTGGI), 118–121 (NKTD), 209–216 (GRPNVGKS), 256–260 (DTAGV), and 321–324 (NKWD) each bind GTP. The region spanning 377 to 461 (RRVGTSMLTR…PIRIQFKEGE (85 aa)) is the KH-like domain.

Belongs to the TRAFAC class TrmE-Era-EngA-EngB-Septin-like GTPase superfamily. EngA (Der) GTPase family. In terms of assembly, associates with the 50S ribosomal subunit.

Functionally, GTPase that plays an essential role in the late steps of ribosome biogenesis. The polypeptide is GTPase Der (Escherichia fergusonii (strain ATCC 35469 / DSM 13698 / CCUG 18766 / IAM 14443 / JCM 21226 / LMG 7866 / NBRC 102419 / NCTC 12128 / CDC 0568-73)).